The chain runs to 201 residues: Cytochrome c oxidase subunit 3 (201 aa).

4 consecutive transmembrane segments (helical) span residues 25–45 (VLGL…LFAA), 65–85 (LFVP…IHYG), 100–120 (WYWI…YEYL), and 137–157 (VMTG…LGVI).

This sequence belongs to the cytochrome c oxidase subunit 3 family.

Its subcellular location is the cell membrane. It carries out the reaction 4 Fe(II)-[cytochrome c] + O2 + 8 H(+)(in) = 4 Fe(III)-[cytochrome c] + 2 H2O + 4 H(+)(out). The sequence is that of Cytochrome c oxidase subunit 3 (ctaE) from Thermostichus vulcanus (Synechococcus vulcanus).